The sequence spans 248 residues: Triosephosphate isomerase (248 aa).

A substrate-binding site is contributed by 9-11; it reads NWK. Residue His-94 is the Electrophile of the active site. The active-site Proton acceptor is the Glu-166. Substrate contacts are provided by residues Gly-172, Ser-212, and 233-234; that span reads GG.

The protein belongs to the triosephosphate isomerase family. In terms of assembly, homodimer.

Its subcellular location is the cytoplasm. The catalysed reaction is D-glyceraldehyde 3-phosphate = dihydroxyacetone phosphate. It participates in carbohydrate biosynthesis; gluconeogenesis. Its pathway is carbohydrate degradation; glycolysis; D-glyceraldehyde 3-phosphate from glycerone phosphate: step 1/1. Functionally, involved in the gluconeogenesis. Catalyzes stereospecifically the conversion of dihydroxyacetone phosphate (DHAP) to D-glyceraldehyde-3-phosphate (G3P). This Clostridium botulinum (strain Eklund 17B / Type B) protein is Triosephosphate isomerase.